Here is a 395-residue protein sequence, read N- to C-terminus: Protein NDRG1 (395 aa).

The segment at 325 to 395 (RSRTGSAASS…NTPKSMEISC (71 aa)) is disordered. Over residues 326–339 (SRTGSAASSSSQDG) the composition is skewed to low complexity. Repeat copies occupy residues 339–348 (GNRSRSHTNE), 349–358 (GSRSRSHTGD), 359–368 (GNRSRAHTGD), and 369–378 (GNRSRSHTDS). The interval 339-378 (GNRSRSHTNEGSRSRSHTGDGNRSRAHTGDGNRSRSHTDS) is 4 X 10 AA tandem repeats of G-[NS]-R-S-R-[AS]-H-T-[DGN]-[DES]. Positions 345–376 (HTNEGSRSRSHTGDGNRSRAHTGDGNRSRSHT) are enriched in basic and acidic residues. The span at 377-389 (DSNNTNSEHNTPK) shows a compositional bias: polar residues.

This sequence belongs to the NDRG family.

May be involved in pronephros development, after specification of the pronephros. This is Protein NDRG1 from Xenopus tropicalis (Western clawed frog).